A 502-amino-acid polypeptide reads, in one-letter code: ATP synthase subunit alpha (502 aa).

Positions 115–139 (VDGLGPVETTETRPIESPAPGVMDR) are disordered. 169–176 (GDRQTGKT) contributes to the ATP binding site.

The protein belongs to the ATPase alpha/beta chains family. F-type ATPases have 2 components, CF(1) - the catalytic core - and CF(0) - the membrane proton channel. CF(1) has five subunits: alpha(3), beta(3), gamma(1), delta(1), epsilon(1). CF(0) has three main subunits: a(1), b(2) and c(9-12). The alpha and beta chains form an alternating ring which encloses part of the gamma chain. CF(1) is attached to CF(0) by a central stalk formed by the gamma and epsilon chains, while a peripheral stalk is formed by the delta and b chains.

Its subcellular location is the cell membrane. The catalysed reaction is ATP + H2O + 4 H(+)(in) = ADP + phosphate + 5 H(+)(out). Produces ATP from ADP in the presence of a proton gradient across the membrane. The alpha chain is a regulatory subunit. The chain is ATP synthase subunit alpha from Geobacillus thermodenitrificans (strain NG80-2).